We begin with the raw amino-acid sequence, 396 residues long: Phosphoglycerate kinase (396 aa).

Substrate contacts are provided by residues 21 to 23, Arg36, 59 to 62, Arg118, and Arg151; these read DFN and HFDR. Residues Lys201, Glu323, and 353–356 each bind ATP; that span reads GGDT.

The protein belongs to the phosphoglycerate kinase family. As to quaternary structure, monomer.

It is found in the cytoplasm. The enzyme catalyses (2R)-3-phosphoglycerate + ATP = (2R)-3-phospho-glyceroyl phosphate + ADP. The protein operates within carbohydrate degradation; glycolysis; pyruvate from D-glyceraldehyde 3-phosphate: step 2/5. The chain is Phosphoglycerate kinase from Caulobacter vibrioides (strain ATCC 19089 / CIP 103742 / CB 15) (Caulobacter crescentus).